Consider the following 177-residue polypeptide: Large ribosomal subunit protein uL6 (177 aa).

Residues 152–171 (RPPEPYKGKGVRYDDEEVRR) show a composition bias toward basic and acidic residues. The segment at 152 to 177 (RPPEPYKGKGVRYDDEEVRRKEAKKK) is disordered.

It belongs to the universal ribosomal protein uL6 family. As to quaternary structure, part of the 50S ribosomal subunit.

In terms of biological role, this protein binds to the 23S rRNA, and is important in its secondary structure. It is located near the subunit interface in the base of the L7/L12 stalk, and near the tRNA binding site of the peptidyltransferase center. The chain is Large ribosomal subunit protein uL6 from Shewanella oneidensis (strain ATCC 700550 / JCM 31522 / CIP 106686 / LMG 19005 / NCIMB 14063 / MR-1).